Reading from the N-terminus, the 67-residue chain is DNA-directed RNA polymerase subunit omega (67 aa).

The protein belongs to the RNA polymerase subunit omega family. As to quaternary structure, the RNAP catalytic core consists of 2 alpha, 1 beta, 1 beta' and 1 omega subunit. When a sigma factor is associated with the core the holoenzyme is formed, which can initiate transcription.

It carries out the reaction RNA(n) + a ribonucleoside 5'-triphosphate = RNA(n+1) + diphosphate. In terms of biological role, promotes RNA polymerase assembly. Latches the N- and C-terminal regions of the beta' subunit thereby facilitating its interaction with the beta and alpha subunits. This Paracidovorax citrulli (strain AAC00-1) (Acidovorax citrulli) protein is DNA-directed RNA polymerase subunit omega.